A 257-amino-acid chain; its full sequence is MIQIDALPAFNDNYIWLLQDPISRRCAVVDPGDAAPVLAWLEAHGDWTLSDILITHHHFDHVGGVEQLKKATGARVAGPAAEKIPARDVDLGDNDLIEVLGLRFQIMAVPGHTLGHIAYYHAEQNLLLCGDTLFAGGCGRLFEGTPQQMHQSLSRLAALPGATRVYCTHEYTLSNLRFAHAVEPHNPDVSARLAEVSRWRDEGRISLPSSIELELATNPFLRTGEPGVIKAAKRNDERSSSEPSAVFASLRAWKDRF.

Zn(2+)-binding residues include His-56, His-58, Asp-60, His-61, His-112, Asp-131, and His-169.

Belongs to the metallo-beta-lactamase superfamily. Glyoxalase II family. As to quaternary structure, monomer. The cofactor is Zn(2+).

The enzyme catalyses an S-(2-hydroxyacyl)glutathione + H2O = a 2-hydroxy carboxylate + glutathione + H(+). It functions in the pathway secondary metabolite metabolism; methylglyoxal degradation; (R)-lactate from methylglyoxal: step 2/2. Functionally, thiolesterase that catalyzes the hydrolysis of S-D-lactoyl-glutathione to form glutathione and D-lactic acid. The sequence is that of Hydroxyacylglutathione hydrolase from Ectopseudomonas mendocina (strain ymp) (Pseudomonas mendocina).